The chain runs to 768 residues: WD repeat-containing protein 20 homolog (768 aa).

The segment at 103–122 is disordered; the sequence is ESPEAVAPTSSTYEHHKNEP. WD repeat units follow at residues 224 to 264, 302 to 342, 345 to 384, and 454 to 497; these read IEKT…ASSN, IGEG…LLAV, SYFG…VVCR, and CSLA…LNQG. The interval 531–608 is disordered; the sequence is VSPGGAGVNA…VNSESSKKQN (78 aa). Residues 539–553 are compositionally biased toward polar residues; it reads NASSDSQSITNNHTT. Residues 570–582 show a composition bias toward low complexity; it reads FSKFTSGSSSATS. Residues 595–608 are compositionally biased toward polar residues; sequence NGASVNSESSKKQN. The stretch at 646–683 is one WD 5 repeat; sequence VSHDRLTVLEFREDCVVTACQEGYICTWGRPGRYQPKR. Positions 684–749 are disordered; it reads DCINSPGTAS…PNITSPSYRV (66 aa). Polar residues predominate over residues 688 to 712; the sequence is SPGTASPESGQKPSGSTSAMTSSYG. The segment covering 724–733 has biased composition (low complexity); sequence SRSSSTYSNS. Positions 734–749 are enriched in polar residues; sequence EQQLRSPNITSPSYRV.

In terms of assembly, interacts with usp-46; the interaction increases the catalytic activity of usp-46 in the presence of wdr-48. Expressed in several neurons in the head and tail.

Its function is as follows. Together with wdr-48, binds to and stimulates the activity of the deubiquitinating enzyme usp-46, leading to deubiquitination and stabilization of the glr-1 glutamate receptor. This is WD repeat-containing protein 20 homolog from Caenorhabditis elegans.